Reading from the N-terminus, the 95-residue chain is MKTLSVLVLCSLAVLCLTSDASFSSQPAVDTPAQEGLFVEQEQASSVVRQAPKELSLSQLESLREVCELNLACEDMMDTSGIIAAYTTYYGPIPF.

An N-terminal signal peptide occupies residues M1–A21. Residues S22–Q50 constitute a propeptide that is removed on maturation. Residues S45 to G91 form the Gla domain. 3 residues coordinate Ca(2+): E61, E65, and E68. 4-carboxyglutamate is present on residues E61, E65, and E68. Residues C67 and C73 are joined by a disulfide bond.

This sequence belongs to the osteocalcin/matrix Gla protein family. Post-translationally, gamma-carboxyglutamate residues are formed by vitamin K dependent carboxylation by GGCX. These residues are essential for the binding of calcium.

Its subcellular location is the secreted. In terms of biological role, the carboxylated form is one of the main organic components of the bone matrix, which constitutes 1-2% of the total bone protein. The carboxylated form binds strongly to apatite and calcium. The protein is Osteocalcin 1 of Solea senegalensis (Senegalese sole).